The following is a 1462-amino-acid chain: MGARASVLRGDKLDTWESIRLKSRGRKKYLIKHLVWAGSELQRFAMNPGLMENVEGCWKIILQLQPSVDIGSPEIISLFNTICVLYCVHAGERVQDTEEAVKIVKMKLTVQKNNSTATSSGQRQNAGEKEETVPPSGNTGNTGRATETPSGSRLYPVITDAQGVARHQPISPRTLNAWVRVIEEKGFNPEVIPMFSALSEGATPYDLNSMLNAVGEHQAAMQMLKEVINEEAAEWDRAHPAHAGPQQAGMLREPTGADIAGTTSTLQEQVLWMTTPQAQGGVPVGDIYKRWIILGLNKLVRMYSPVSILDIKQGPKEPFRDYVDRFYKTIRAEQASQPVKTWMTETLLVQNANPDCKHILKALGQGATLEEMLTACQGVGGPSHKAKILAEAMASATAGGVNMLQGGKRPPLKKGQLQCFNCGKVGHTARNCRAPRKKGCWRCGQEGHQMKDCTTRNNSTGVNFFRETHPLVGVQTRELCAEHPREREGSGAGDSTDTSGANCPTTGDDDERRVLPQVNLWQRPMMTVKVQGQVCQALLDTGADDSVFCNIKLKGQWTPKTIGGIGGFVPVSEYYNIPVQIGNKEVRATVLVGETPINIIGRNILKQLGCTLNFPISPIEVVKVQLKEGMDGPKVKQWPLSKEKIEALTEICKTLEKEGKISAVGPENPYNTPIFAIKKKDTSKWRKLVDFRELNKRTQDFWELQLGIPHPAGLRKRNMVTVLDVGDAYFSIPLDPDFRKYTAFTIPSLNNNTPGKRFQYNVLPQGWKGSPAIFQSSMTKILDPFRKEHPDVDIYQYMDDLYIGSDLNEEEHRKLIKKLRQHLLTWGLETPDKKYQEKPPFMWMGYELHPNKWTVQNITLPEPEQWTVNHIQKLVGKLNWASQIYHGIKTKELCKLIRGVKGLTEPVEMTREAELELEENKQILKEKVQGAYYDPKLPLQAAIQKQGQGQWTYQIYQEEGKNLKTGKYAKSPGTHTNEIRQLAGLIQKIGNESIIIWGIVPKFLLPVSKETWSQWWTDYWQVTWVPEWEFINTPPLIRLWYNLLSDPIPEAETFYVDGAANRDSKKGRAGYVTNRGRYRSKDLENTTNQQAELWAVDLALKDSGAQVNIVTDSQYVMGVLQGLPDQSDSPIVEQIIQKLTQKTAIYLAWVPAHKGIGGNEEVDKLVSKNIRKILFLDGINEAQEDHDKYHSNWKALADEYNLPPVVAKEIIAQCPKCHIKGEAIHGQVDYSPEIWQIDCTHLEGKVIIVAVHVASGFIEAEVIPEETGRETAYFILKLAGRWPVKKIHTDNGPNFTSTAVKAACWWAQIQHEFGIPYNPQSQGVVESMNKQLKQIIEQVRDQAEQLRTAVIMAVYIHNFKRKGGIGEYTAGERLLDILTTNIQTKQLQKQILKVQNFRVYYRDARDPIWKGPARLLWKGEGAVVIKEGEDIKVVPRRKAKIIKEYGKQMAGAGGMDDRQNET.

G2 carries the N-myristoyl glycine; by host lipid modification. The short motif at 16–22 (WESIRLK) is the Nuclear export signal element. Residues 26-32 (RKKYLIK) carry the Nuclear localization signal motif. 2 stretches are compositionally biased toward polar residues: residues 113–125 (NNST…QRQN) and 135–151 (PSGN…TPSG). The tract at residues 113-153 (NNSTATSSGQRQNAGEKEETVPPSGNTGNTGRATETPSGSR) is disordered. Y155 carries the phosphotyrosine; by host modification. 2 consecutive CCHC-type zinc fingers follow at residues 417-434 (LQCF…NCRA) and 438-455 (KGCW…DCTT). The tract at residues 482-513 (EHPREREGSGAGDSTDTSGANCPTTGDDDERR) is disordered. Residues 535 to 604 (CQALLDTGAD…TPINIIGRNI (70 aa)) form the Peptidase A2 domain. D540 serves as the catalytic For protease activity; shared with dimeric partner. The Reverse transcriptase domain occupies 658 to 848 (EGKISAVGPE…PPFMWMGYEL (191 aa)). Mg(2+)-binding residues include D724, D799, and D800. Residues 841-849 (FMWMGYELH) are RT 'primer grip'. Residues 1012–1028 (WSQWWTDYWQVTWVPEW) carry the Tryptophan repeat motif motif. The region spanning 1048 to 1171 (IPEAETFYVD…VDKLVSKNIR (124 aa)) is the RNase H type-1 domain. D1057, E1092, D1112, and D1163 together coordinate Mg(2+). Residues 1177–1218 (DGINEAQEDHDKYHSNWKALADEYNLPPVVAKEIIAQCPKCH) form an Integrase-type zinc finger. Zn(2+)-binding residues include H1186, H1190, C1214, and C1217. One can recognise an Integrase catalytic domain in the interval 1228-1378 (VDYSPEIWQI…TAGERLLDIL (151 aa)). The Mg(2+) site is built by D1238 and D1290. The integrase-type DNA-binding region spans 1397–1444 (FRVYYRDARDPIWKGPARLLWKGEGAVVIKEGEDIKVVPRRKAKIIKE).

Homotrimer. Interacts with gp41 (via C-terminus). As to quaternary structure, homodimer. The active site consists of two apposed aspartic acid residues. In terms of assembly, heterodimer of p66 RT and p51 RT (RT p66/p51). Heterodimerization of RT is essential for DNA polymerase activity. Despite the sequence identities, p66 RT and p51 RT have distinct folding. Homotetramer; may further associate as a homohexadecamer. Mg(2+) is required as a cofactor. In terms of processing, specific enzymatic cleavages by the viral protease yield mature proteins. The protease is released by autocatalytic cleavage. The polyprotein is cleaved during and after budding, this process is termed maturation. Proteolytic cleavage of p66 RT removes the RNase H domain to yield the p51 RT subunit. Capsid protein p24 is phosphorylated.

Its subcellular location is the virion. The protein resides in the host nucleus. It is found in the host cytoplasm. It localises to the host cell membrane. It catalyses the reaction Specific for a P1 residue that is hydrophobic, and P1' variable, but often Pro.. The catalysed reaction is Endohydrolysis of RNA in RNA/DNA hybrids. Three different cleavage modes: 1. sequence-specific internal cleavage of RNA. Human immunodeficiency virus type 1 and Moloney murine leukemia virus enzymes prefer to cleave the RNA strand one nucleotide away from the RNA-DNA junction. 2. RNA 5'-end directed cleavage 13-19 nucleotides from the RNA end. 3. DNA 3'-end directed cleavage 15-20 nucleotides away from the primer terminus.. The enzyme catalyses 3'-end directed exonucleolytic cleavage of viral RNA-DNA hybrid.. It carries out the reaction DNA(n) + a 2'-deoxyribonucleoside 5'-triphosphate = DNA(n+1) + diphosphate. Its activity is regulated as follows. The viral protease is inhibited by many synthetic protease inhibitors (PIs), such as amprenavir, atazanavir, indinavir, loprinavir, nelfinavir, ritonavir and saquinavir. RT can be inhibited either by nucleoside RT inhibitors (NRTIs) or by non nucleoside RT inhibitors (NNRTIs). NRTIs act as chain terminators, whereas NNRTIs inhibit DNA polymerization by binding a small hydrophobic pocket near the RT active site and inducing an allosteric change in this region. Classical NRTIs are abacavir, adefovir (PMEA), didanosine (ddI), lamivudine (3TC), stavudine (d4T), tenofovir (PMPA), zalcitabine (ddC), and zidovudine (AZT). Classical NNRTIs are atevirdine (BHAP U-87201E), delavirdine, efavirenz (DMP-266), emivirine (I-EBU), and nevirapine (BI-RG-587). The tritherapies used as a basic effective treatment of AIDS associate two NRTIs and one NNRTI. Use of protease inhibitors in tritherapy regimens permit more ambitious therapeutic strategies. Its function is as follows. Gag-Pol polyprotein and Gag polyprotein may regulate their own translation, by the binding genomic RNA in the 5'-UTR. At low concentration, Gag-Pol and Gag would promote translation, whereas at high concentration, the polyproteins encapsidate genomic RNA and then shut off translation. Matrix protein p17 has two main functions: in infected cell, it targets Gag and Gag-pol polyproteins to the plasma membrane via a multipartite membrane-binding signal, that includes its myristointegration complex. The myristoylation signal and the NLS exert conflicting influences its subcellular localization. The key regulation of these motifs might be phosphorylation of a portion of MA molecules on the C-terminal tyrosine at the time of virus maturation, by virion-associated cellular tyrosine kinase. Implicated in the release from host cell mediated by Vpu. In terms of biological role, capsid protein p24 forms the conical core that encapsulates the genomic RNA-nucleocapsid complex in the virion. The core is constituted by capsid protein hexamer subunits. The core is disassembled soon after virion entry. Interaction with host PPIA/CYPA protects the virus from restriction by host TRIM5-alpha and from an unknown antiviral activity in host cells. This capsid restriction by TRIM5 is one of the factors which restricts SIV to the simian species. Functionally, nucleocapsid protein p7 encapsulates and protects viral dimeric unspliced (genomic) RNA. Binds these RNAs through its zinc fingers. Facilitates rearangement of nucleic acid secondary structure during retrotranscription of genomic RNA. This capability is referred to as nucleic acid chaperone activity. Its function is as follows. The aspartyl protease mediates proteolytic cleavages of Gag and Gag-Pol polyproteins during or shortly after the release of the virion from the plasma membrane. Cleavages take place as an ordered, step-wise cascade to yield mature proteins. This process is called maturation. Displays maximal activity during the budding process just prior to particle release from the cell. Also cleaves Nef and Vif, probably concomitantly with viral structural proteins on maturation of virus particles. Hydrolyzes host EIF4GI and PABP1 in order to shut off the capped cellular mRNA translation. The resulting inhibition of cellular protein synthesis serves to ensure maximal viral gene expression and to evade host immune response. Reverse transcriptase/ribonuclease H (RT) is a multifunctional enzyme that converts the viral dimeric RNA genome into dsDNA in the cytoplasm, shortly after virus entry into the cell. This enzyme displays a DNA polymerase activity that can copy either DNA or RNA templates, and a ribonuclease H (RNase H) activity that cleaves the RNA strand of RNA-DNA heteroduplexes in a partially processive 3' to 5' endonucleasic mode. Conversion of viral genomic RNA into dsDNA requires many steps. A tRNA binds to the primer-binding site (PBS) situated at the 5'-end of the viral RNA. RT uses the 3' end of the tRNA primer to perform a short round of RNA-dependent minus-strand DNA synthesis. The reading proceeds through the U5 region and ends after the repeated (R) region which is present at both ends of viral RNA. The portion of the RNA-DNA heteroduplex is digested by the RNase H, resulting in a ssDNA product attached to the tRNA primer. This ssDNA/tRNA hybridizes with the identical R region situated at the 3' end of viral RNA. This template exchange, known as minus-strand DNA strong stop transfer, can be either intra- or intermolecular. RT uses the 3' end of this newly synthesized short ssDNA to perform the RNA-dependent minus-strand DNA synthesis of the whole template. RNase H digests the RNA template except for two polypurine tracts (PPTs) situated at the 5'-end and near the center of the genome. It is not clear if both polymerase and RNase H activities are simultaneous. RNase H can probably proceed both in a polymerase-dependent (RNA cut into small fragments by the same RT performing DNA synthesis) and a polymerase-independent mode (cleavage of remaining RNA fragments by free RTs). Secondly, RT performs DNA-directed plus-strand DNA synthesis using the PPTs that have not been removed by RNase H as primers. PPTs and tRNA primers are then removed by RNase H. The 3' and 5' ssDNA PBS regions hybridize to form a circular dsDNA intermediate. Strand displacement synthesis by RT to the PBS and PPT ends produces a blunt ended, linear dsDNA copy of the viral genome that includes long terminal repeats (LTRs) at both ends. In terms of biological role, integrase catalyzes viral DNA integration into the host chromosome, by performing a series of DNA cutting and joining reactions. This enzyme activity takes place after virion entry into a cell and reverse transcription of the RNA genome in dsDNA. The first step in the integration process is 3' processing. This step requires a complex comprising the viral genome, matrix protein, Vpr and integrase. This complex is called the pre-integration complex (PIC). The integrase protein removes 2 nucleotides from each 3' end of the viral DNA, leaving recessed CA OH's at the 3' ends. In the second step, the PIC enters cell nucleus. This process is mediated through integrase and Vpr proteins, and allows the virus to infect a non dividing cell. This ability to enter the nucleus is specific of lentiviruses, other retroviruses cannot and rely on cell division to access cell chromosomes. In the third step, termed strand transfer, the integrase protein joins the previously processed 3' ends to the 5' ends of strands of target cellular DNA at the site of integration. The 5'-ends are produced by integrase-catalyzed staggered cuts, 5 bp apart. A Y-shaped, gapped, recombination intermediate results, with the 5'-ends of the viral DNA strands and the 3' ends of target DNA strands remaining unjoined, flanking a gap of 5 bp. The last step is viral DNA integration into host chromosome. This involves host DNA repair synthesis in which the 5 bp gaps between the unjoined strands are filled in and then ligated. Since this process occurs at both cuts flanking the SIV genome, a 5 bp duplication of host DNA is produced at the ends of SIV integration. Alternatively, Integrase may catalyze the excision of viral DNA just after strand transfer, this is termed disintegration. This is Gag-Pol polyprotein (gag-pol) from Simian immunodeficiency virus (isolate TAN1) (SIV-cpz).